The following is a 74-amino-acid chain: Protein SOM1, mitochondrial (74 aa).

Component of the mitochondrial inner membrane peptidase (IMP) complex which at least consists of IMP1, IMP2 and SOM1.

The protein localises to the mitochondrion inner membrane. In terms of biological role, non-catalytic component of the mitochondrial inner membrane peptidase (IMP) complex. IMP catalyzes the removal of signal peptides required for the targeting of proteins from the mitochondrial matrix, across the inner membrane, into the inter-membrane space. SOM1 facilitates cleavage of a subset of IMP substrates. The polypeptide is Protein SOM1, mitochondrial (SOM1) (Saccharomyces cerevisiae (strain ATCC 204508 / S288c) (Baker's yeast)).